Consider the following 95-residue polypeptide: Co-chaperonin GroES (95 aa).

Belongs to the GroES chaperonin family. In terms of assembly, heptamer of 7 subunits arranged in a ring. Interacts with the chaperonin GroEL.

The protein localises to the cytoplasm. Together with the chaperonin GroEL, plays an essential role in assisting protein folding. The GroEL-GroES system forms a nano-cage that allows encapsulation of the non-native substrate proteins and provides a physical environment optimized to promote and accelerate protein folding. GroES binds to the apical surface of the GroEL ring, thereby capping the opening of the GroEL channel. The chain is Co-chaperonin GroES from Methylocella silvestris (strain DSM 15510 / CIP 108128 / LMG 27833 / NCIMB 13906 / BL2).